Consider the following 105-residue polypeptide: UPF0145 protein LPC_0273 (105 aa).

It belongs to the UPF0145 family.

The polypeptide is UPF0145 protein LPC_0273 (Legionella pneumophila (strain Corby)).